Consider the following 107-residue polypeptide: MSATPQVSDASFKEDVLDSELPVLVDFWAPWCGPCRMVAPVVDEISQQYEGKVKVVKLNTDENPNTASQYGIRSIPTLMIFKGGQRVDMVVGAVPKTTLASTLEKYL.

A Thioredoxin domain is found at 2–107 (SATPQVSDAS…TLASTLEKYL (106 aa)). Cys32 and Cys35 form a disulfide bridge.

It belongs to the thioredoxin family.

Its function is as follows. Component of the thioredoxin-thioredoxin reductase system. Participates in various redox reactions through the reversible oxidation of its active center dithiol to a disulfide and catalyzes dithiol-disulfide exchange reactions. This is Thioredoxin (trxA) from Synechocystis sp. (strain ATCC 27184 / PCC 6803 / Kazusa).